The chain runs to 100 residues: Aspartyl/glutamyl-tRNA(Asn/Gln) amidotransferase subunit C (100 aa).

Belongs to the GatC family. Heterotrimer of A, B and C subunits.

The enzyme catalyses L-glutamyl-tRNA(Gln) + L-glutamine + ATP + H2O = L-glutaminyl-tRNA(Gln) + L-glutamate + ADP + phosphate + H(+). It carries out the reaction L-aspartyl-tRNA(Asn) + L-glutamine + ATP + H2O = L-asparaginyl-tRNA(Asn) + L-glutamate + ADP + phosphate + 2 H(+). Allows the formation of correctly charged Asn-tRNA(Asn) or Gln-tRNA(Gln) through the transamidation of misacylated Asp-tRNA(Asn) or Glu-tRNA(Gln) in organisms which lack either or both of asparaginyl-tRNA or glutaminyl-tRNA synthetases. The reaction takes place in the presence of glutamine and ATP through an activated phospho-Asp-tRNA(Asn) or phospho-Glu-tRNA(Gln). This is Aspartyl/glutamyl-tRNA(Asn/Gln) amidotransferase subunit C from Staphylococcus saprophyticus subsp. saprophyticus (strain ATCC 15305 / DSM 20229 / NCIMB 8711 / NCTC 7292 / S-41).